A 327-amino-acid chain; its full sequence is MFNDIPVFDYEDIQLIPNKCIITSRSQADTSVTLGKYQFKLPVIPANMQTIIDETIAERLAKEGYFYIMHRFDEDSRKPFIKRMHEQGLIASISVGVKACEYEFVTSLKEDAPEFITIDIAHGHANSVIDMIKHIKTELPETFVIAGNVGTPEAVRELENAGADATKVGIGPGKVCITKVKTGFGTGGWQLAALRWCAKAARKPIIADGGIRTHGDIAKSIRFGASMVMIGSLFAGHIESPGKTVEVDGETFKEYYGSASEYQKGEHKNVEGKKILLPTKGHLSDTLTEMQQDLQSSISYAGGKDLDSLRHVDYVIVKNSIWNGDSI.

Cysteine 176 acts as the Thioimidate intermediate in catalysis. An NADP(+)-binding site is contributed by 205-228 (IIADGGIRTHGDIAKSIRFGASMV).

It belongs to the IMPDH/GMPR family. GuaC type 2 subfamily.

The catalysed reaction is IMP + NH4(+) + NADP(+) = GMP + NADPH + 2 H(+). Catalyzes the irreversible NADPH-dependent deamination of GMP to IMP. It functions in the conversion of nucleobase, nucleoside and nucleotide derivatives of G to A nucleotides, and in maintaining the intracellular balance of A and G nucleotides. The polypeptide is GMP reductase (Streptococcus pyogenes serotype M28 (strain MGAS6180)).